Reading from the N-terminus, the 236-residue chain is Phosphoribosylaminoimidazole-succinocarboxamide synthase (236 aa).

It belongs to the SAICAR synthetase family.

The catalysed reaction is 5-amino-1-(5-phospho-D-ribosyl)imidazole-4-carboxylate + L-aspartate + ATP = (2S)-2-[5-amino-1-(5-phospho-beta-D-ribosyl)imidazole-4-carboxamido]succinate + ADP + phosphate + 2 H(+). It functions in the pathway purine metabolism; IMP biosynthesis via de novo pathway; 5-amino-1-(5-phospho-D-ribosyl)imidazole-4-carboxamide from 5-amino-1-(5-phospho-D-ribosyl)imidazole-4-carboxylate: step 1/2. The chain is Phosphoribosylaminoimidazole-succinocarboxamide synthase from Pseudomonas syringae pv. tomato (strain ATCC BAA-871 / DC3000).